The sequence spans 389 residues: Formate-dependent phosphoribosylglycinamide formyltransferase (389 aa).

N(1)-(5-phospho-beta-D-ribosyl)glycinamide contacts are provided by residues 15 to 16 and Glu-75; that span reads EL. ATP-binding positions include Arg-107, Lys-148, 153–158, 188–191, and Glu-196; these read SSGKGQ and EEFL. The ATP-grasp domain occupies 112–302; it reads DLAAGELALR…EFELHLRAVL (191 aa). Glu-261 and Glu-273 together coordinate Mg(2+). N(1)-(5-phospho-beta-D-ribosyl)glycinamide-binding positions include Asp-280, Lys-350, and 357–358; that span reads RR.

The protein belongs to the PurK/PurT family. Homodimer.

The catalysed reaction is N(1)-(5-phospho-beta-D-ribosyl)glycinamide + formate + ATP = N(2)-formyl-N(1)-(5-phospho-beta-D-ribosyl)glycinamide + ADP + phosphate + H(+). The protein operates within purine metabolism; IMP biosynthesis via de novo pathway; N(2)-formyl-N(1)-(5-phospho-D-ribosyl)glycinamide from N(1)-(5-phospho-D-ribosyl)glycinamide (formate route): step 1/1. In terms of biological role, involved in the de novo purine biosynthesis. Catalyzes the transfer of formate to 5-phospho-ribosyl-glycinamide (GAR), producing 5-phospho-ribosyl-N-formylglycinamide (FGAR). Formate is provided by PurU via hydrolysis of 10-formyl-tetrahydrofolate. The protein is Formate-dependent phosphoribosylglycinamide formyltransferase of Synechococcus sp. (strain WH7803).